We begin with the raw amino-acid sequence, 498 residues long: Succinate-semialdehyde dehydrogenase [NADP(+)] 1 (498 aa).

247 to 252 (GSTNVG) is a binding site for NAD(+). Catalysis depends on residues Glu-269 and Cys-303.

It belongs to the aldehyde dehydrogenase family. In terms of assembly, homotetramer.

It localises to the cytoplasm. The catalysed reaction is succinate semialdehyde + NAD(+) + H2O = succinate + NADH + 2 H(+). It catalyses the reaction succinate semialdehyde + NADP(+) + H2O = succinate + NADPH + 2 H(+). Its pathway is amino-acid degradation; 4-aminobutanoate degradation. Catalyzes the oxidation of succinate semialdehyde to succinate. Can utilize both NAD(+) or NADP(+) as a coenzyme. Functions in a gamma-aminobutyrate (GABA) degradation pathway that allows growth utilizing GABA as a nitrogen source. Functions in the GABA shunt, which allows to bypass 2 reactions in the TCA cycle by removing alpha-ketoglutarate from the cycle and feeding succinate and NADH back into the cycle. The polypeptide is Succinate-semialdehyde dehydrogenase [NADP(+)] 1 (ssd1) (Schizosaccharomyces pombe (strain 972 / ATCC 24843) (Fission yeast)).